Consider the following 793-residue polypeptide: Wall-associated receptor kinase-like 18 (793 aa).

Positions 1-28 (MSNESTNCSFFLNLFMLLLLLIFYSADA) are cleaved as a signal peptide. The Extracellular segment spans residues 29 to 378 (CQRECGGISI…YRCVRDKTKA (350 aa)). N-linked (GlcNAc...) asparagine glycosylation is found at Asn60, Asn130, Asn170, Asn238, Asn285, and Asn304. An atypical EGF-like region spans residues 312 to 371 (CTCGRITISETSYANCGCTYGYTGNPYVLNGCKDIDECKVKFEYCGKTETCVNFEGGYRC). Intrachain disulfides connect Cys314–Cys327, Cys349–Cys362, and Cys356–Cys371. Residues 379–399 (IMIGAGTGFGVLVLVGGLWWL) form a helical membrane-spanning segment. At 400–793 (RKFLIKRRIT…VEPLFPRLTW (394 aa)) the chain is on the cytoplasmic side. Residues 453 to 728 (FSENRVLGHG…REVFTELERI (276 aa)) form the Protein kinase domain. ATP is bound by residues 459–467 (LGHGGQGTV) and Lys481. Phosphotyrosine is present on Tyr526. Residue Asp579 is the Proton acceptor of the active site. A phosphothreonine mark is found at Thr613 and Thr618. Phosphotyrosine is present on Tyr626. The interval 733 to 757 (EDSQVHNRIDEEEEEEEEEEEVVTT) is disordered. Residues 742–754 (DEEEEEEEEEEEV) show a composition bias toward acidic residues.

The protein belongs to the protein kinase superfamily. Ser/Thr protein kinase family.

It is found in the membrane. It carries out the reaction L-seryl-[protein] + ATP = O-phospho-L-seryl-[protein] + ADP + H(+). The enzyme catalyses L-threonyl-[protein] + ATP = O-phospho-L-threonyl-[protein] + ADP + H(+). Functionally, serine/threonine-protein kinase that may function as a signaling receptor of extracellular matrix component. The protein is Wall-associated receptor kinase-like 18 (WAKL18) of Arabidopsis thaliana (Mouse-ear cress).